We begin with the raw amino-acid sequence, 334 residues long: Ribosomal RNA small subunit methyltransferase H (334 aa).

Residues 53 to 55, Asp-72, Phe-99, Asp-122, and His-129 each bind S-adenosyl-L-methionine; that span reads GGH.

Belongs to the methyltransferase superfamily. RsmH family.

It localises to the cytoplasm. The catalysed reaction is cytidine(1402) in 16S rRNA + S-adenosyl-L-methionine = N(4)-methylcytidine(1402) in 16S rRNA + S-adenosyl-L-homocysteine + H(+). Its function is as follows. Specifically methylates the N4 position of cytidine in position 1402 (C1402) of 16S rRNA. The sequence is that of Ribosomal RNA small subunit methyltransferase H from Leptospira interrogans serogroup Icterohaemorrhagiae serovar copenhageni (strain Fiocruz L1-130).